Reading from the N-terminus, the 448-residue chain is Metacaspase-1 (448 aa).

A disordered region spans residues M1–S129. Residues Y10 to Y44 show a composition bias toward low complexity. Residues S61–G70 show a composition bias toward pro residues. Over residues Y99–G114 the composition is skewed to polar residues. Catalysis depends on residues H231 and C292.

The protein belongs to the peptidase C14B family.

Involved in cell death (apoptosis). The polypeptide is Metacaspase-1 (MCA1) (Candida albicans (strain SC5314 / ATCC MYA-2876) (Yeast)).